The chain runs to 175 residues: Transcription factor HES-3 (175 aa).

The bHLH domain occupies M1 to L49. The Orange domain maps to Y65–R98. Residues R126 to R166 are disordered. A compositionally biased stretch (low complexity) spans G129 to S148. Positions W172 to W175 match the WRPW motif motif.

In terms of assembly, transcription repression requires formation of a complex with a corepressor protein of the Groucho/TLE family.

Its subcellular location is the nucleus. In terms of biological role, transcriptional repressor of genes that require a bHLH protein for their transcription. In Mus musculus (Mouse), this protein is Transcription factor HES-3 (Hes3).